Here is a 2294-residue protein sequence, read N- to C-terminus: Reducing polyketide synthase BOA9 (2294 aa).

Positions 4–409 (PEPVAIIGMG…GANATAIVEA (406 aa)) constitute a Ketosynthase family 3 (KS3) domain. Positions 537–853 (IFTGQGAQNA…DYAATLVRGQ (317 aa)) are malonyl-CoA:ACP transacylase (MAT) domain. Serine 630 functions as the For malonyltransferase activity in the catalytic mechanism. The N-terminal hotdog fold stretch occupies residues 930 to 1067 (HDLLGAILPG…GTVTKKKAVT (138 aa)). Residues 930 to 1104 (HDLLGAILPG…LNYGPAFNGL (175 aa)) are dehydratase (DH) domain. Residues 930–1236 (HDLLGAILPG…CTQYSEALDD (307 aa)) enclose the PKS/mFAS DH domain. Histidine 962 (proton acceptor; for dehydratase activity) is an active-site residue. Residues 1078–1236 (QEPKAARTWY…CTQYSEALDD (159 aa)) are C-terminal hotdog fold. Aspartate 1142 functions as the Proton donor; for dehydratase activity in the catalytic mechanism. Residues 1618–1908 (GIFDTIHFKD…KNSRIGRVVV (291 aa)) form an enoyl reductase (ER) domain region. The interval 1934–2107 (VHTYLLGVLE…LPATTISLTV (174 aa)) is ketoreductase (KR) domain. Residues 2214–2292 (LLLPDILEMI…SLAKKIYDIR (79 aa)) enclose the Carrier domain. Serine 2251 is subject to O-(pantetheine 4'-phosphoryl)serine.

Its pathway is polyketide biosynthesis. In terms of biological role, reducing polyketide synthase; part of the gene cluster B that mediates the biosynthesis of botcinic acid and its botcinin derivatives, acetate-derived polyketides that contribute to virulence when combined with the sesquiterpene botrydial. Botcinic acid and its derivatives have been shown to induce chlorosis and necrosis during host plant infection, but also have antifungal activities. Two polyketide synthases, BOA6 and BOA9, are involved in the biosynthesis of botcinins. BOA6 mediates the formation of the per-methylated tetraketide core by condensation of four units of malonyl-CoA with one unit of acetyl-CoA, which would be methylated in activated methylene groups to yield a bicyclic acid intermediate that could then either be converted to botrylactone derivatives or lose the starter acetate unit through a retro-Claisen type C-C bond cleavage to yield botcinin derivatives. The second polyketide synthase, BOA9, is probably required for the biosynthesis of the tetraketide side chain of botcinins. The methyltransferase (MT) domain within BOA6 is probably responsible for the incorporation of four methyl groups. The trans-enoyl reductase BOA5 might take over the enoyl reductase function of BOA6 that misses an ER domain. The monooxygenases BOA2, BOA3 and BOA4 might be involved in further hydroxylations at C4, C5 and C8, whereas BOA7, close to BOA9, could potentially be involved in the hydroxylation at C4 in the side chain of botcinins. The polypeptide is Reducing polyketide synthase BOA9 (Botryotinia fuckeliana (strain B05.10) (Noble rot fungus)).